Here is a 1037-residue protein sequence, read N- to C-terminus: Mediator of RNA polymerase II transcription subunit 14 (1037 aa).

It belongs to the Mediator complex subunit 14 family. Component of the Mediator complex.

The protein resides in the nucleus. Its function is as follows. Component of the Mediator complex, a coactivator involved in the regulated transcription of nearly all RNA polymerase II-dependent genes. Mediator functions as a bridge to convey information from gene-specific regulatory proteins to the basal RNA polymerase II transcription machinery. Mediator is recruited to promoters by direct interactions with regulatory proteins and serves as a scaffold for the assembly of a functional preinitiation complex with RNA polymerase II and the general transcription factors. The polypeptide is Mediator of RNA polymerase II transcription subunit 14 (RGR1) (Candida glabrata (strain ATCC 2001 / BCRC 20586 / JCM 3761 / NBRC 0622 / NRRL Y-65 / CBS 138) (Yeast)).